The following is a 111-amino-acid chain: Large ribosomal subunit protein uL23 (111 aa).

This sequence belongs to the universal ribosomal protein uL23 family. In terms of assembly, part of the 50S ribosomal subunit. Contacts protein L29, and trigger factor when it is bound to the ribosome.

In terms of biological role, one of the early assembly proteins it binds 23S rRNA. One of the proteins that surrounds the polypeptide exit tunnel on the outside of the ribosome. Forms the main docking site for trigger factor binding to the ribosome. This is Large ribosomal subunit protein uL23 from Chlamydia trachomatis serovar L2 (strain ATCC VR-902B / DSM 19102 / 434/Bu).